The following is a 192-amino-acid chain: Elongation factor P (192 aa).

An N6-(3,6-diaminohexanoyl)-5-hydroxylysine modification is found at Lys37.

Belongs to the elongation factor P family. May be beta-lysylated on the epsilon-amino group of Lys-37 by the combined action of EpmA and EpmB, and then hydroxylated on the C5 position of the same residue by EpmC (if this protein is present). Lysylation is critical for the stimulatory effect of EF-P on peptide-bond formation. The lysylation moiety may extend toward the peptidyltransferase center and stabilize the terminal 3-CCA end of the tRNA. Hydroxylation of the C5 position on Lys-37 may allow additional potential stabilizing hydrogen-bond interactions with the P-tRNA.

It is found in the cytoplasm. It participates in protein biosynthesis; polypeptide chain elongation. Its function is as follows. Involved in peptide bond synthesis. Alleviates ribosome stalling that occurs when 3 or more consecutive Pro residues or the sequence PPG is present in a protein, possibly by augmenting the peptidyl transferase activity of the ribosome. Modification of Lys-37 is required for alleviation. This Acinetobacter baylyi (strain ATCC 33305 / BD413 / ADP1) protein is Elongation factor P.